The chain runs to 226 residues: ATP-dependent dethiobiotin synthetase BioD (226 aa).

An ATP-binding site is contributed by 14-19; sequence GIGKTF. A Mg(2+)-binding site is contributed by threonine 18. Lysine 39 is a catalytic residue. A substrate-binding site is contributed by serine 43. Residues aspartate 56, 117–120, 177–178, 206–208, and asparagine 213 each bind ATP; these read EGVG, NT, and PHI. 2 residues coordinate Mg(2+): aspartate 56 and glutamate 117.

Belongs to the dethiobiotin synthetase family. Homodimer. The cofactor is Mg(2+).

It is found in the cytoplasm. It carries out the reaction (7R,8S)-7,8-diammoniononanoate + CO2 + ATP = (4R,5S)-dethiobiotin + ADP + phosphate + 3 H(+). The protein operates within cofactor biosynthesis; biotin biosynthesis; biotin from 7,8-diaminononanoate: step 1/2. In terms of biological role, catalyzes a mechanistically unusual reaction, the ATP-dependent insertion of CO2 between the N7 and N8 nitrogen atoms of 7,8-diaminopelargonic acid (DAPA, also called 7,8-diammoniononanoate) to form a ureido ring. This is ATP-dependent dethiobiotin synthetase BioD from Xylella fastidiosa (strain M12).